Reading from the N-terminus, the 2346-residue chain is Nucleoprotein TPR (2346 aa).

Coiled coils occupy residues 38–190, 217–366, 395–493, and 565–596; these read DEYC…HKEI, QLQS…NLES, YAKS…SRQV, and KMLLEQSKNHIRKLDARFAELEDLLTQKNNTV. The tract at residues 622–649 is disordered; sequence VDLDDSNLEPNDSALDTSEQPAANFEES. Residues 629-642 show a composition bias toward polar residues; it reads LEPNDSALDTSEQP. 2 coiled-coil regions span residues 643–1158 and 1196–1247; these read AANF…IEAL and EEGR…DELN. An interacts with Mad1 region spans residues 1187 to 1655; sequence LNASGLTAAE…SPRTANVKPM (469 aa). Threonine 1259, threonine 1302, threonine 1338, and threonine 1390 each carry phosphothreonine. Coiled-coil stretches lie at residues 1281 to 1536 and 1579 to 1627; these read TDSN…KRTE and SYDE…GSQQ. Composition is skewed to polar residues over residues 1621–1649 and 1657–1667; these read RQLGSQQSTKPSTSSVAEKGNISESSPRT and GSATVQQSATV. 3 disordered regions span residues 1621 to 1677, 1695 to 1768, and 1821 to 2346; these read RQLG…ETPL, PTSQ…YMPS, and SPRV…GRFP. The segment covering 1702–1722 has biased composition (low complexity); the sequence is AGSSTSTSSSSSSSSTSTTSA. Residues 1738-1747 are compositionally biased toward polar residues; that stretch reads PQQQVHTTGS. Composition is skewed to low complexity over residues 1752 to 1761 and 1827 to 1878; these read SMASSSPTSS and SSSS…PSSS. Residues 1879 to 1891 show a composition bias toward polar residues; sequence NVTTTQAGCSSQG. Residues 1953–2023 show a composition bias toward acidic residues; it reads QEDDIQVVDS…QDNNEVDIEV (71 aa). The span at 2028 to 2080 shows a compositional bias: polar residues; the sequence is MQAQEESQSLDNQAIATASASTQENNQSQAITSGSGESSNPVTLPQAEASNWK. A compositionally biased stretch (low complexity) spans 2082–2091; that stretch reads AAASTSTAAA. 2 stretches are compositionally biased toward polar residues: residues 2097-2110 and 2142-2159; these read SVEIVSSPQVSNFC and GAASASSPQKQSEAGESS. Residues 2165-2184 show a composition bias toward basic and acidic residues; it reads KAADDGGDHADGTDNAREAD. Composition is skewed to polar residues over residues 2193 to 2223 and 2302 to 2322; these read ATGQGEDSQPLGNDNPNVGTSQSEVSHNQAN and RDTSPGNIQQNQMSANNNRFA. Residues 2323–2332 show a composition bias toward basic residues; it reads QRTRNRRPIR.

This sequence belongs to the TPR family. As to quaternary structure, part of the nuclear pore complex (NPC). Associates with male-specific lethal (MSL) histone acetyltransferase complex. Interacts with Mad2; the interaction is required for efficient recruitment of Mad2 to unattached kinetochore and occurs in a microtubule-independent manner. Interacts with Mad1 (N-terminus). Interacts with Chro, east and Asator; the interaction is part of a macromolecular complex forming the spindle matrix during mitosis. Interacts with Nup98. In males, interacts with histone acetyltransferase mof. In terms of processing, mps1-mediated phosphorylation disrupts interaction with Mad1 during mitosis. Expressed in salivary glands, fat body, tracheal tube, esophageal tube and anterior ejaculatory duct (at protein level).

The protein localises to the nucleus. It localises to the nucleus matrix. It is found in the nucleus lamina. The protein resides in the nucleus envelope. Its subcellular location is the nucleus membrane. The protein localises to the nuclear pore complex. It localises to the cytoplasm. It is found in the cytoskeleton. The protein resides in the spindle. Its subcellular location is the chromosome. The protein localises to the centromere. It localises to the kinetochore. It is found in the midbody. In terms of biological role, component of the nuclear pore complex (NPC), a complex required for the trafficking across the nuclear envelope. Functions as a scaffolding element in the nuclear phase of the NPC. Plays a role in chromosomal organization and gene expression regulation; stimulates transcription by promoting the formation of an open chromatin environment. Binds chromatin to nucleoporin-associated regions (NARs) that define transcriptionally active regions of the genome. Associates with extended chromosomal regions that alternate between domains of high density binding with those of low occupancy. Preferentially binds to NARs of the male X chromosome. In males, together with Nup153, required for the localization of the male-specific lethal (MSL) histone acetyltransferase complex to the X chromosome and therefore for the transcription of dosage compensation genes. In males, restrains dosage-compensated expression at the level of nascent transcription probably by interacting with the MSL complex and by modulating RNA Polymerase II phosphorylation status and activity. During mitosis forms a gel-like spindle matrix complex together with Skeletor (Skel), Chro, east, and Asator embedding the microtubule spindle apparatus. During interphase localizes Mad1 to the nuclear pore complex and thereby might act as a scaffold to assemble the Mad1-C-Mad2 complex, a heterotetramer that catalyzes the structural conversion of open-Mad2 (O-Mad2) into closed-Mad2 (C-Mad2) which is essential for spindle-assembly checkpoint (SAC). During the metaphase-anaphase transition and before chromosome congression, is phosphorylated by Msp-1; this modification releases Mad1 from the nuclear pore complex and thereby promotes assembly of SAC ensuring a timely and effective recruitment of spindle checkpoint proteins like Mad1, Mad2 and Mps1 to unattached kinetochores (KT). In testes, has a role in stem cell asymmetric division and maintenance via regulation of mitotic spindle assembly checkpoint (SAC) complex. This is Nucleoprotein TPR from Drosophila melanogaster (Fruit fly).